Consider the following 341-residue polypeptide: Uroporphyrinogen decarboxylase (341 aa).

Residues 23–27 (RQAGR), Asp-73, Tyr-148, Ser-203, and His-318 each bind substrate.

Belongs to the uroporphyrinogen decarboxylase family. Homodimer.

The protein resides in the cytoplasm. The enzyme catalyses uroporphyrinogen III + 4 H(+) = coproporphyrinogen III + 4 CO2. The protein operates within porphyrin-containing compound metabolism; protoporphyrin-IX biosynthesis; coproporphyrinogen-III from 5-aminolevulinate: step 4/4. Catalyzes the decarboxylation of four acetate groups of uroporphyrinogen-III to yield coproporphyrinogen-III. This Brucella suis (strain ATCC 23445 / NCTC 10510) protein is Uroporphyrinogen decarboxylase.